Consider the following 405-residue polypeptide: CMP-sialic acid transporter 3 (405 aa).

The Cytoplasmic portion of the chain corresponds to 1–39; sequence MKNGIAECPACHSKLVSPGSKTISRAYDDHKIRVSSKQR. A helical membrane pass occupies residues 40–60; the sequence is VLNVLLVVGDCMLVGLQPVLV. At 61–73 the chain is on the lumenal side; sequence YMSKVDGKFNFSP. A helical membrane pass occupies residues 74 to 94; it reads ISVNFLTEIAKVIFAIVMLLI. Residues 95 to 142 lie on the Cytoplasmic side of the membrane; sequence QARHQKVGEKPLLSVSTFVQAARNNVLLAVPALLYAINNYLKFTMQLY. A helical transmembrane segment spans residues 143 to 163; it reads FNPATVKMLSNLKVLVIAVLL. Topologically, residues 164 to 170 are lumenal; that stretch reads KMVMKRR. A helical transmembrane segment spans residues 171–191; sequence FSIIQWEALALLLIGISVNQL. Residues 192 to 199 are Cytoplasmic-facing; that stretch reads RSLPEGAT. A helical transmembrane segment spans residues 200 to 220; it reads AIGIPLATGAYVCTVIFVTVP. Residues 221-243 are Lumenal-facing; it reads SMASVFNEYALKSQYDTSIYLQN. A helical transmembrane segment spans residues 244–264; it reads LFLYGYGAIFNFLGILGTVIY. The Cytoplasmic portion of the chain corresponds to 265–280; sequence KGPGSFDILQGHSRAT. A helical transmembrane segment spans residues 281–301; it reads MFLILNNAAQGILSSFFFKYA. At 302–321 the chain is on the lumenal side; that stretch reads DTILKKYSSTVATIFTGIAS. Residues 322–342 form a helical membrane-spanning segment; that stretch reads AALFGHVITMNFLLGISIVFI. Residues 343-405 are Cytoplasmic-facing; the sequence is SMHQFFSPLA…SDDRTPLLPR (63 aa). Residues 385–405 are disordered; that stretch reads GANEEASHRGESDDRTPLLPR. Basic and acidic residues predominate over residues 389–405; that stretch reads EASHRGESDDRTPLLPR.

This sequence belongs to the nucleotide-sugar transporter family. CMP-Sialate:CMP antiporter (TC 2.A.7.12) subfamily.

It localises to the golgi apparatus membrane. In terms of biological role, sugar transporter involved in the transport of CMP-sialic acid from the cytoplasm into the Golgi. In Arabidopsis thaliana (Mouse-ear cress), this protein is CMP-sialic acid transporter 3 (UTR6).